Here is a 212-residue protein sequence, read N- to C-terminus: MNRKKLQKLTDTLTKNCKHFDKFEVKCLITLFYNLVGDVAERPGVVTGLDRNVFRNILHVTFGMTDDMIMDRVFRGFDKDNDGCISVSEWIHGLSLFLRGTLDEKMKYCFEVFDLNGDGFISKEEMFHMLKNSLLKQPSEEDPDEGIKDLVEITLKKMDHDHDGKLSFVDYEKAVREENLLLEAFGPCLPDPKSQMEFEAQVFKDPNEFNDM.

3 EF-hand domains span residues 65–100, 101–136, and 146–181; these read TDDM…FLRG, TLDE…SLLK, and GIKD…ENLL. Residues Asp78, Asp80, Asp82, Cys84, Glu89, Asp114, Asn116, Asp118, Glu125, Asp159, Asp161, Asp163, Lys165, and Asp170 each contribute to the Ca(2+) site.

As to quaternary structure, component of the outer dynein arm-docking complex along with ODAD1, ODAD2, ODAD3 and ODAD4.

The protein localises to the cytoplasm. It is found in the cytoskeleton. Its subcellular location is the cilium axoneme. The protein resides in the cell projection. It localises to the cilium. The protein localises to the flagellum. Its function is as follows. Component of the outer dynein arm-docking complex (ODA-DC) that mediates outer dynein arms (ODA) binding onto the doublet microtubule. Seems to regulate the assembly of both ODAs and their axonemal docking complex onto ciliary microtubules. Regulates ciliary and flagellar motility and is required for cilia-driven determination of body laterality. The chain is Calaxin (Clxn) from Mus musculus (Mouse).